We begin with the raw amino-acid sequence, 150 residues long: MSSKKIVLTSSDDECFEIDEAVARKMQMVAHMIDDDCADKAIRLQNVTGKILAIIIEYCKKHVDDVEAKNEFVTWDAEFVKNIDMDTLFKLLDAADYLIVIGLKNLIAQAIADYTADKTVNEIRELFNIENDYTPEEEEELRKKNEWAFN.

Residues 92–150 (LDAADYLIVIGLKNLIAQAIADYTADKTVNEIRELFNIENDYTPEEEEELRKKNEWAFN) form an interaction with the F-box domain of F-box proteins region.

Belongs to the SKP1 family. As to quaternary structure, part of a SCF (SKP1-cullin-F-box) protein ligase complex. Interacts with CPR1/CPR30. In terms of tissue distribution, mainly detected in the siliques.

The protein localises to the nucleus. It participates in protein modification; protein ubiquitination. Functionally, involved in ubiquitination and subsequent proteasomal degradation of target proteins. Together with CUL1, RBX1 and a F-box protein, it forms a SCF E3 ubiquitin ligase complex. The functional specificity of this complex depends on the type of F-box protein. In the SCF complex, it serves as an adapter that links the F-box protein to CUL1. Probably implicated in incompatibility response after hybridization. The protein is SKP1-like protein 17 (ASK17) of Arabidopsis thaliana (Mouse-ear cress).